A 212-amino-acid chain; its full sequence is Cyclin-dependent kinase inhibitor 3 (212 aa).

Residues 1-12 are compositionally biased toward polar residues; that stretch reads MKPPSSIQTSEF. A disordered region spans residues 1–20; the sequence is MKPPSSIQTSEFDSSDEEPI. The segment at 1-34 is interaction with CDK2; sequence MKPPSSIQTSEFDSSDEEPIEDEQTPIHISWLSL. A Tyrosine-protein phosphatase domain is found at 33 to 201; it reads SLSRVNCSQF…FRDKLAAHLS (169 aa). Cys140 functions as the Phosphocysteine intermediate in the catalytic mechanism.

The protein belongs to the protein-tyrosine phosphatase family. As to quaternary structure, interacts with cyclin-dependent kinases such as CDK1, CDK2 and CDK3. Does not interact with CDK4. Interacts (via C-terminus) with phosphorylated CDK2 (via C-terminal helix). Interacts with MS4A3 (via C-terminus); the interaction enhances CDKN3 enzymatic activity.

Its subcellular location is the cytoplasm. It is found in the perinuclear region. It catalyses the reaction O-phospho-L-tyrosyl-[protein] + H2O = L-tyrosyl-[protein] + phosphate. The enzyme catalyses O-phospho-L-threonyl-[protein] + H2O = L-threonyl-[protein] + phosphate. The catalysed reaction is O-phospho-L-seryl-[protein] + H2O = L-seryl-[protein] + phosphate. In terms of biological role, may play a role in cell cycle regulation. Dual specificity CC phosphatase active toward substrates containing either phosphotyrosine or phosphoserine residues. Dephosphorylates CDK2 at 'Thr-160' in a cyclin-dependent manner. The polypeptide is Cyclin-dependent kinase inhibitor 3 (Homo sapiens (Human)).